The chain runs to 284 residues: Elongation factor Ts (284 aa).

The involved in Mg(2+) ion dislocation from EF-Tu stretch occupies residues 80 to 83; that stretch reads TDFV.

The protein belongs to the EF-Ts family.

Its subcellular location is the cytoplasm. Associates with the EF-Tu.GDP complex and induces the exchange of GDP to GTP. It remains bound to the aminoacyl-tRNA.EF-Tu.GTP complex up to the GTP hydrolysis stage on the ribosome. The chain is Elongation factor Ts from Neisseria meningitidis serogroup A / serotype 4A (strain DSM 15465 / Z2491).